The primary structure comprises 164 residues: Coenzyme Q-binding protein coq10, mitochondrial (164 aa).

Belongs to the COQ10 family. As to quaternary structure, interacts with coenzyme Q.

The protein resides in the mitochondrion inner membrane. Its function is as follows. Required for the function of coenzyme Q in the respiratory chain. May serve as a chaperone or may be involved in the transport of Q6 from its site of synthesis to the catalytic sites of the respiratory complexes. The polypeptide is Coenzyme Q-binding protein coq10, mitochondrial (Schizosaccharomyces pombe (strain 972 / ATCC 24843) (Fission yeast)).